We begin with the raw amino-acid sequence, 512 residues long: Phosphoenolpyruvate carboxylase (512 aa).

It belongs to the PEPCase type 2 family. Homotetramer. Mg(2+) serves as cofactor.

The enzyme catalyses oxaloacetate + phosphate = phosphoenolpyruvate + hydrogencarbonate. Catalyzes the irreversible beta-carboxylation of phosphoenolpyruvate (PEP) to form oxaloacetate (OAA), a four-carbon dicarboxylic acid source for the tricarboxylic acid cycle. In Caldivirga maquilingensis (strain ATCC 700844 / DSM 13496 / JCM 10307 / IC-167), this protein is Phosphoenolpyruvate carboxylase.